The following is a 220-amino-acid chain: Phosphoserine phosphatase (220 aa).

Aspartate 11 serves as the catalytic Nucleophile. Aspartate 11 and aspartate 13 together coordinate Mg(2+). Aspartate 13 serves as the catalytic Proton donor. Substrate is bound by residues glutamate 20, arginine 56, 99 to 100 (SG), and lysine 144. Aspartate 167 lines the Mg(2+) pocket. Asparagine 170 provides a ligand contact to substrate.

The protein belongs to the HAD-like hydrolase superfamily. SerB family. The cofactor is Mg(2+).

It carries out the reaction O-phospho-L-serine + H2O = L-serine + phosphate. The catalysed reaction is O-phospho-D-serine + H2O = D-serine + phosphate. The protein operates within amino-acid biosynthesis; L-serine biosynthesis; L-serine from 3-phospho-D-glycerate: step 3/3. The sequence is that of Phosphoserine phosphatase from Idiomarina loihiensis (strain ATCC BAA-735 / DSM 15497 / L2-TR).